Here is a 709-residue protein sequence, read N- to C-terminus: Elongation factor G (709 aa).

A tr-type G domain is found at 8 to 297; that stretch reads ANTRNIGIMA…AVIDYLPSPL (290 aa). GTP is bound by residues 17–24, 81–85, and 135–138; these read AHVDAGKT, DTPGH, and NKMD.

It belongs to the TRAFAC class translation factor GTPase superfamily. Classic translation factor GTPase family. EF-G/EF-2 subfamily.

It is found in the cytoplasm. Its function is as follows. Catalyzes the GTP-dependent ribosomal translocation step during translation elongation. During this step, the ribosome changes from the pre-translocational (PRE) to the post-translocational (POST) state as the newly formed A-site-bound peptidyl-tRNA and P-site-bound deacylated tRNA move to the P and E sites, respectively. Catalyzes the coordinated movement of the two tRNA molecules, the mRNA and conformational changes in the ribosome. This is Elongation factor G from Lactococcus lactis subsp. lactis (strain IL1403) (Streptococcus lactis).